Consider the following 296-residue polypeptide: m7GpppN-mRNA hydrolase NUDT17 (296 aa).

A Nudix hydrolase domain is found at Gly90–Pro236. The Nudix box signature appears at Gly129–Gly150. Residues Glu144 and Glu148 each contribute to the Mg(2+) site.

The protein belongs to the Nudix hydrolase family. Requires Mg(2+) as cofactor. Mn(2+) serves as cofactor.

The catalysed reaction is a 5'-end (N(7)-methyl 5'-triphosphoguanosine)-ribonucleoside in mRNA + H2O = N(7)-methyl-GDP + a 5'-end phospho-ribonucleoside in mRNA + 2 H(+). Functionally, acts as a decapping enzyme capable of hydrolyzing monomethylated capped RNAs (in vitro). Hydrolyzes monomethylated capped RNA after alpha and beta phosphates to form N(7)-methyl-GDP. Shows low activity towards unmethylated capped RNA. This chain is m7GpppN-mRNA hydrolase NUDT17 (nudt17), found in Xenopus laevis (African clawed frog).